A 203-amino-acid chain; its full sequence is Urease accessory protein UreG (203 aa).

GTP is bound at residue 14–21 (GPVGSGKT).

Belongs to the SIMIBI class G3E GTPase family. UreG subfamily. In terms of assembly, homodimer. UreD, UreF and UreG form a complex that acts as a GTP-hydrolysis-dependent molecular chaperone, activating the urease apoprotein by helping to assemble the nickel containing metallocenter of UreC. The UreE protein probably delivers the nickel.

The protein localises to the cytoplasm. Functionally, facilitates the functional incorporation of the urease nickel metallocenter. This process requires GTP hydrolysis, probably effectuated by UreG. In Agrobacterium fabrum (strain C58 / ATCC 33970) (Agrobacterium tumefaciens (strain C58)), this protein is Urease accessory protein UreG.